The chain runs to 476 residues: Argininosuccinate lyase (476 aa).

The protein belongs to the lyase 1 family. Argininosuccinate lyase subfamily.

Its subcellular location is the cytoplasm. The catalysed reaction is 2-(N(omega)-L-arginino)succinate = fumarate + L-arginine. The protein operates within amino-acid biosynthesis; L-arginine biosynthesis; L-arginine from L-ornithine and carbamoyl phosphate: step 3/3. The polypeptide is Argininosuccinate lyase (Leptothrix cholodnii (strain ATCC 51168 / LMG 8142 / SP-6) (Leptothrix discophora (strain SP-6))).